The primary structure comprises 419 residues: MVSESHHEALAAPPVTTVATVLPSNATEPASPGEGKEDAFSKLKEKFMNELHKIPLPPWALIAIAIVAVLLVLTCCFCICKKCLFKKKNKKKGKEKGGKNAINMKDVKDLGKTMKDQDDDAETGLTDGEEKEEPKEEEKLGKLQYSLDYDFQNNQLLVGIIQAAELPALDMGGTSDPYVKVFLLPDKKKKFETKVHRKTLNPVFNEQFTFKVPYSELGGKTLVMAVYDFDRFSKHDIIGEFKVPMNTVDFGHVTEEWRDLQSAEKEEQEKLGDICFSLRYVPTAGKLTVVILEAKNLKKMDVGGLSDPYVKIHLMQNGKRLKKKKTTIKKNTLNPYYNESFSFEVPFEQIQKVQVVVTVLDYDKIGKNDAIGKVFVGYNSTGAELRHWSDMLANPRRPIAQWHTLQVEEEVDAMLAVKK.

At 1-57 (MVSESHHEALAAPPVTTVATVLPSNATEPASPGEGKEDAFSKLKEKFMNELHKIPLP) the chain is on the vesicular side. N-linked (GlcNAc...) asparagine glycosylation is present at asparagine 25. Residues 58–80 (PWALIAIAIVAVLLVLTCCFCIC) form a helical membrane-spanning segment. Residues cysteine 75, cysteine 76, cysteine 78, cysteine 80, and cysteine 83 are each lipidated (S-palmitoyl cysteine). The Cytoplasmic portion of the chain corresponds to 81-419 (KKCLFKKKNK…EVDAMLAVKK (339 aa)). The interval 108–139 (KDLGKTMKDQDDDAETGLTDGEEKEEPKEEEK) is disordered. Acidic residues predominate over residues 117-131 (QDDDAETGLTDGEEK). The residue at position 126 (threonine 126) is a Phosphothreonine. The interval 133-379 (EPKEEEKLGK…AIGKVFVGYN (247 aa)) is phospholipid binding. Residues 139–258 (KLGKLQYSLD…DFGHVTEEWR (120 aa)) form the C2 1 domain. Ca(2+) contacts are provided by leucine 169, aspartate 170, and aspartate 176. The residue at position 227 (tyrosine 227) is a Phosphotyrosine. Residues aspartate 228, phenylalanine 229, aspartate 230, serine 233, lysine 234, and aspartate 236 each coordinate Ca(2+). A Phosphoserine modification is found at serine 262. The C2 2 domain maps to 270–403 (KLGDICFSLR…NPRRPIAQWH (134 aa)). 2 residues coordinate Ca(2+): aspartate 301 and aspartate 307. 2 positions are modified to phosphoserine: serine 340 and serine 342. Ca(2+) contacts are provided by aspartate 361, aspartate 363, and aspartate 369.

This sequence belongs to the synaptotagmin family. As to quaternary structure, homotetramer. Heterodimer; heterodimerizes with SYT2 in presence of calcium. Interacts with SCAMP5. Interacts with STON2. Forms a complex with SV2B, syntaxin 1 and SNAP25. Interacts with SV2A, SV2B and SV2C. Interacts with RIMS1. Interacts with PRRT2. Interacts with DNAJC5 in a phosphorylation-dependent manner. Interacts (via N-terminus) with RAB3A. Interacts with SYT12. Interacts with calmodulin. Interacts with DNM1 (via C-terminal proline-rich domain (PRD)); this interaction facilitates vesicle fission during clathrin-mediated endocytosis (CME). It depends on Ca(2+) as a cofactor. In terms of processing, glycosylated.

The protein localises to the cytoplasmic vesicle. It is found in the secretory vesicle membrane. Its subcellular location is the secretory vesicle. The protein resides in the synaptic vesicle membrane. It localises to the chromaffin granule membrane. The protein localises to the cytoplasm. In terms of biological role, calcium sensor that participates in triggering neurotransmitter release at the synapse. May have a regulatory role in the membrane interactions during trafficking of synaptic vesicles at the active zone of the synapse. It binds acidic phospholipids with a specificity that requires the presence of both an acidic head group and a diacyl backbone. A Ca(2+)-dependent interaction between synaptotagmin and putative receptors for activated protein kinase C has also been reported. It can bind to at least three additional proteins in a Ca(2+)-independent manner; these are neurexins, syntaxin and AP2. Plays a role in dendrite formation by melanocytes. This is Synaptotagmin-1 from Macaca fascicularis (Crab-eating macaque).